A 144-amino-acid polypeptide reads, in one-letter code: Small ribosomal subunit protein uS19 (144 aa).

Belongs to the universal ribosomal protein uS19 family.

In Dictyostelium discoideum (Social amoeba), this protein is Small ribosomal subunit protein uS19 (rps15).